Here is a 1093-residue protein sequence, read N- to C-terminus: Small G protein signaling modulator 1 (1093 aa).

The region spanning 36–190 (HEDSSHIISF…EYTKMKTADH (155 aa)) is the RUN domain. Residues 256-297 (LLYGKNNVLVQPRDDMEAVPGYLSLHQTADVMTLKWTPNQLM) form an important for interaction with RAB9A and RAB9B region. A required for interaction with RAP family members region spans residues 301–350 (VGDLDYEKSVYWDYAVTIRLEEIVYLHCHQQVDSGGTVVLVSQDGIQRPP). 3 disordered regions span residues 377 to 412 (DPPL…KEDD), 645 to 778 (DSTI…ELAV), and 810 to 838 (DGAV…EEPE). Positions 385–397 (GKGKVFPKLRKRS) are enriched in basic residues. Residues 562-1026 (GVQPEIRRAV…SVWETIWAAK (465 aa)) form the Rab-GAP TBC domain. The span at 647–676 (TISNESSQSCSSGRQNLRLQSDSSSSTQVF) shows a compositional bias: polar residues. Residues 687 to 696 (AEGRSEEKHP) are compositionally biased toward basic and acidic residues. Residues 702-736 (NPANGTCSPDSGHPSSHNFSSGLSEHSEPSLSTED) show a composition bias toward polar residues. Composition is skewed to basic and acidic residues over residues 766 to 776 (TSRDEAPREEL) and 820 to 829 (EADKPSRADS).

It belongs to the RUTBC family. In terms of assembly, interacts with RAB9A (GTP-bound form) and RAB9B. Interacts with RAB3A, RAB4A, RAB5A, RAB8A, RAB11A, RAP1A, RAP1B, RAP2A and RAP2B. No interaction with RAB27A. In terms of tissue distribution, expressed only in brain.

The protein localises to the golgi apparatus. It localises to the trans-Golgi network. It is found in the cytoplasm. Its subcellular location is the cytoplasmic vesicle membrane. Functionally, interacts with numerous Rab family members, functioning as Rab effector for some, and as GTPase activator for others. Promotes GTP hydrolysis by RAB34 and RAB36. Probably functions as a GTPase effector with RAB9A and RAB9B; does not stimulate GTP hydrolysis with RAB9A and RAB9B. The polypeptide is Small G protein signaling modulator 1 (Sgsm1) (Mus musculus (Mouse)).